A 185-amino-acid chain; its full sequence is Potassium-transporting ATPase KdpC subunit (185 aa).

A helical membrane pass occupies residues 14 to 34; that stretch reads ALSLLTGVAYPLALTGIAAVI. The interval 105 to 128 is disordered; the sequence is AQNGAPAPVDAVTASGSGLDPHVS.

It belongs to the KdpC family. As to quaternary structure, the system is composed of three essential subunits: KdpA, KdpB and KdpC.

The protein localises to the cell inner membrane. Functionally, part of the high-affinity ATP-driven potassium transport (or Kdp) system, which catalyzes the hydrolysis of ATP coupled with the electrogenic transport of potassium into the cytoplasm. This subunit acts as a catalytic chaperone that increases the ATP-binding affinity of the ATP-hydrolyzing subunit KdpB by the formation of a transient KdpB/KdpC/ATP ternary complex. This Cereibacter sphaeroides (strain ATCC 17029 / ATH 2.4.9) (Rhodobacter sphaeroides) protein is Potassium-transporting ATPase KdpC subunit.